The sequence spans 334 residues: Glyceraldehyde-3-phosphate dehydrogenase (334 aa).

NAD(+) is bound by residues 10–11, Asp33, Lys77, and Thr119; that span reads RI. D-glyceraldehyde 3-phosphate contacts are provided by residues 149–151, Thr180, 209–210, and Arg232; these read SCT and TG. Cys150 functions as the Nucleophile in the catalytic mechanism. Residue Asn314 participates in NAD(+) binding.

Belongs to the glyceraldehyde-3-phosphate dehydrogenase family. Homotetramer.

Its subcellular location is the cytoplasm. It carries out the reaction D-glyceraldehyde 3-phosphate + phosphate + NAD(+) = (2R)-3-phospho-glyceroyl phosphate + NADH + H(+). Its pathway is carbohydrate degradation; glycolysis; pyruvate from D-glyceraldehyde 3-phosphate: step 1/5. Functionally, catalyzes the oxidative phosphorylation of glyceraldehyde 3-phosphate (G3P) to 1,3-bisphosphoglycerate (BPG) using the cofactor NAD. The first reaction step involves the formation of a hemiacetal intermediate between G3P and a cysteine residue, and this hemiacetal intermediate is then oxidized to a thioester, with concomitant reduction of NAD to NADH. The reduced NADH is then exchanged with the second NAD, and the thioester is attacked by a nucleophilic inorganic phosphate to produce BPG. In Chlamydia trachomatis serovar D (strain ATCC VR-885 / DSM 19411 / UW-3/Cx), this protein is Glyceraldehyde-3-phosphate dehydrogenase (gap).